Here is a 638-residue protein sequence, read N- to C-terminus: Phosphomethylpyrimidine synthase (638 aa).

Substrate contacts are provided by residues asparagine 236, methionine 265, tyrosine 294, histidine 330, 350–352 (SRG), 391–394 (DGLR), and glutamate 430. Histidine 434 lines the Zn(2+) pocket. Residue tyrosine 457 participates in substrate binding. Histidine 498 contributes to the Zn(2+) binding site. [4Fe-4S] cluster-binding residues include cysteine 578, cysteine 581, and cysteine 586.

This sequence belongs to the ThiC family. Homodimer. [4Fe-4S] cluster serves as cofactor.

The enzyme catalyses 5-amino-1-(5-phospho-beta-D-ribosyl)imidazole + S-adenosyl-L-methionine = 4-amino-2-methyl-5-(phosphooxymethyl)pyrimidine + CO + 5'-deoxyadenosine + formate + L-methionine + 3 H(+). It functions in the pathway cofactor biosynthesis; thiamine diphosphate biosynthesis. Functionally, catalyzes the synthesis of the hydroxymethylpyrimidine phosphate (HMP-P) moiety of thiamine from aminoimidazole ribotide (AIR) in a radical S-adenosyl-L-methionine (SAM)-dependent reaction. The protein is Phosphomethylpyrimidine synthase of Polaromonas sp. (strain JS666 / ATCC BAA-500).